We begin with the raw amino-acid sequence, 121 residues long: MAELNVEIVAVDRKIWSGEATFLFTRTTVGEIGILPRHIPLVAQLVDDAMVRVEREGEDDLRIAVDGGFLSVTEETVTILAESAEFSSEIDESAAREAAESDDPRVAARGRARLRAVGAID.

Belongs to the ATPase epsilon chain family. F-type ATPases have 2 components, CF(1) - the catalytic core - and CF(0) - the membrane proton channel. CF(1) has five subunits: alpha(3), beta(3), gamma(1), delta(1), epsilon(1). CF(0) has three main subunits: a, b and c.

It is found in the cell membrane. Its function is as follows. Produces ATP from ADP in the presence of a proton gradient across the membrane. This is ATP synthase epsilon chain from Mycobacterium avium (strain 104).